The chain runs to 906 residues: MKFHILLLLLVGACLPVFTQEIKPKPELLPADEAPKDPEAVFSEGEPFELTDALDTPKNGSVPVPEPEPKPEPEPEPEPKPEPEPSPTPEPEPAIKFDNIESEDYGDVAETAASTQPDELNTEVIEQLVDTFLNTGSIASNKTNKGPVFANPVAQALVNSSNYWKTDNLQAPGSIKDEEKLRSWLAGYEAEAIKVLREVALSGWRYFNDASPSLKLALDEAENVLTMFVRSTSMQAKQFDMASVTDEKVMRQLGYVSFEGMSALAPSRFADYSQAQAALNRDSKDSTICDKDVPPPCALQKIDMDSIFRNEKDASRLQHLWVSYVTAIAKSKPSYNNIITISNEGAKLNGFANGGAMWRSAFDMSSKVHKAEFDLNKQIDKIYSTIQPFYQLLHAYMRRQLAGIYSNPVGLSKDGPIPAHLFGSLDGGDWSAHYEQTKPFEEESETPEAMLSAFNTQNYTTKKMFVTAYRYFKSAGFPHLPKSYWTSSIFARVWSKDMICHPAAALDMRAPNDFRVKACAQLGEPDFEQAHSLLVQTYYQYLYKDQSLLFREQASPVITDAIANAFAHLSTNPHYLYSQKLVPSEHLDIKDSVIINKLYKESLESFTKLPFTIAADNWRYELFDGTVPKNKLNDRWWEIRNKYEGVRSPQPYNTSNLDALIHNSVSQVHSPATRTLISYVLKFQILKALCPEGTILSEGCILSEDTTEKLRETMKLGSSITWLKALEMISGKGELDAQPLLEYYEPLINWLRNTNEIDQVVVGWDGEGTPFTVEEIPKTRQPGDGGNGLPSEDRVAFPGGECVNGQECLLDSHCNGTICVCNDGLYTLEIGNTFNCVPGNPADSGFGDGKGGLVIGLFNNEVTTPEPSAEPEPTAKTTTKMPPRVRAATSPFSLYLTVLLIIYFAL.

The N-terminal stretch at 1-19 (MKFHILLLLLVGACLPVFT) is a signal peptide. A disordered region spans residues 28–95 (LLPADEAPKD…SPTPEPEPAI (68 aa)). Residues 67–83 (PEPKPEPEPEPEPKPEP) show a composition bias toward basic and acidic residues. N159 carries N-linked (GlcNAc...) asparagine glycosylation. The region spanning 175–765 (IKDEEKLRSW…EIDQVVVGWD (591 aa)) is the Peptidase M2 domain. C289 and C297 form a disulfide bridge. N-linked (GlcNAc...) asparagine glycosylation is present at N653. A disordered region spans residues 862-882 (VTTPEPSAEPEPTAKTTTKMP). Low complexity predominate over residues 863–882 (TTPEPSAEPEPTAKTTTKMP).

It belongs to the peptidase M2 family. As to expression, expressed in the hypodermis, in the vulva during organogenesis, and in the ray papillae of the male tail.

Inactive as a metallopeptidase, due to a lack of active site residues. Required for larval molting, male tail development, and formation of adult alae. Acts in the heterochronic pathway and plays a role in the developmental timing of postembryonic hypodermal seam cell division and adult alae production. Acts synergistically with apl-1 in let-7 regulated postembryonic cell division events. Might act downstream of the heterochronic protein lin-41. Negative regulator of lifespan, heat and oxidative stress response and age-related degenerative changes like reduced pharyngeal pumping and decreased body movements. Lifespan restriction is dependent on the forkhead-type transcription factor daf-16. This is Inactive angiotensin-converting enzyme-related protein from Caenorhabditis elegans.